The following is a 631-amino-acid chain: Polyadenylate-binding protein 3 (631 aa).

RRM domains are found at residues 11–89 (ASLY…WSQR), 99–175 (GNIF…QFKS), 191–268 (PNVY…RAQK), and 294–370 (VNLY…LAQR). At Tyr140 the chain carries Phosphotyrosine. Residue Ser315 is modified to Phosphoserine. Lys361 bears the N6,N6-dimethyllysine; alternate mark. Lys361 participates in a covalent cross-link: Glycyl lysine isopeptide (Lys-Gly) (interchain with G-Cter in SUMO2); alternate. Tyr364 carries the post-translational modification Phosphotyrosine. Arg426, Arg430, and Arg449 each carry omega-N-methylarginine. Arg501 bears the Dimethylated arginine mark. Residue Arg513 is modified to Omega-N-methylarginine. The region spanning 537-614 (QETLTASRLA…AVAVLQAHQA (78 aa)) is the PABC domain.

This sequence belongs to the polyadenylate-binding protein type-1 family. As to expression, testis specific.

It is found in the cytoplasm. Its function is as follows. Binds the poly(A) tail of mRNA. May be involved in cytoplasmic regulatory processes of mRNA metabolism. Binds poly(A) with a slightly lower affinity as compared to PABPC1. This chain is Polyadenylate-binding protein 3 (PABPC3), found in Homo sapiens (Human).